Here is a 415-residue protein sequence, read N- to C-terminus: Phosphoglycerate kinase (415 aa).

Residues 24-26 (DLN), Arg43, 66-69 (HLGR), Arg125, and Arg165 each bind substrate. ATP-binding positions include Lys215, Gly303, Glu334, and 363 to 366 (GGDS).

The protein belongs to the phosphoglycerate kinase family. In terms of assembly, monomer.

Its subcellular location is the cytoplasm. The catalysed reaction is (2R)-3-phosphoglycerate + ATP = (2R)-3-phospho-glyceroyl phosphate + ADP. Its pathway is carbohydrate degradation; glycolysis; pyruvate from D-glyceraldehyde 3-phosphate: step 2/5. In Mycobacterium avium (strain 104), this protein is Phosphoglycerate kinase.